A 175-amino-acid chain; its full sequence is ATP synthase subunit b (175 aa).

Residues 20–40 (LIFWTAVTFVIVLVILKKIAW) traverse the membrane as a helical segment.

This sequence belongs to the ATPase B chain family. F-type ATPases have 2 components, F(1) - the catalytic core - and F(0) - the membrane proton channel. F(1) has five subunits: alpha(3), beta(3), gamma(1), delta(1), epsilon(1). F(0) has four main subunits: a(1), b(2) and c(10-14). The alpha and beta chains form an alternating ring which encloses part of the gamma chain. F(1) is attached to F(0) by a central stalk formed by the gamma and epsilon chains, while a peripheral stalk is formed by the delta and b chains.

Its subcellular location is the cell inner membrane. Functionally, f(1)F(0) ATP synthase produces ATP from ADP in the presence of a proton or sodium gradient. F-type ATPases consist of two structural domains, F(1) containing the extramembraneous catalytic core and F(0) containing the membrane proton channel, linked together by a central stalk and a peripheral stalk. During catalysis, ATP synthesis in the catalytic domain of F(1) is coupled via a rotary mechanism of the central stalk subunits to proton translocation. Its function is as follows. Component of the F(0) channel, it forms part of the peripheral stalk, linking F(1) to F(0). This Chlorobaculum parvum (strain DSM 263 / NCIMB 8327) (Chlorobium vibrioforme subsp. thiosulfatophilum) protein is ATP synthase subunit b.